We begin with the raw amino-acid sequence, 346 residues long: Cyclin-dependent kinase 20 (346 aa).

In terms of domain architecture, Protein kinase spans 4 to 288 (YCILGRIGEG…ASKALLHQYF (285 aa)). ATP-binding positions include 10–18 (IGEGAHGIV) and Lys33. Asp127 functions as the Proton acceptor in the catalytic mechanism.

This sequence belongs to the protein kinase superfamily. CMGC Ser/Thr protein kinase family. CDC2/CDKX subfamily. Monomer. Interacts with TBC1D32 and MAK.

The protein resides in the nucleus. The protein localises to the cytoplasm. It is found in the cell projection. It localises to the cilium. The catalysed reaction is L-seryl-[protein] + ATP = O-phospho-L-seryl-[protein] + ADP + H(+). The enzyme catalyses L-threonyl-[protein] + ATP = O-phospho-L-threonyl-[protein] + ADP + H(+). Required for high-level Shh responses in the developing neural tube. Together with TBC1D32, controls the structure of the primary cilium by coordinating assembly of the ciliary membrane and axoneme, allowing GLI2 to be properly activated in response to SHH signaling. Involved in cell growth. Activates CDK2, a kinase involved in the control of the cell cycle, by phosphorylating residue 'Thr-160'. The protein is Cyclin-dependent kinase 20 (CDK20) of Pongo abelii (Sumatran orangutan).